A 75-amino-acid polypeptide reads, in one-letter code: Dermaseptin-SP5 (75 aa).

The signal sequence occupies residues 1-22; the sequence is MAFLKKSLFLVLFLGLVSLSMC. The propeptide occupies 23-45; that stretch reads EEEKRENEVEEEQEDDEQSELRR. Positions 26–46 are disordered; the sequence is KRENEVEEEQEDDEQSELRRS. The segment covering 30–40 has biased composition (acidic residues); the sequence is EVEEEQEDDEQ. At P72 the chain carries Proline amide. The propeptide occupies 74–75; sequence EQ.

It belongs to the frog skin active peptide (FSAP) family. Dermaseptin subfamily. In terms of tissue distribution, expressed by the skin glands.

It localises to the secreted. It is found in the target cell membrane. Functionally, antimicrobial peptide with weak activity against Gram-positive and Gram-negative bacteria and fungi. Has been tested against E.coli (MIC=96.06-256 uM), S.aureus (MIC&gt;192.12 uM), K.pneumoniae (MIC&gt;189.00 uM) and C.albicans (MIC=384.24-1024 uM). Probably acts by disturbing membrane functions with its alpha-helical amphipathic structure. May penetrate bacterial membranes, but stay at the mammalian membrane surface. Does not show hemolytic activity. Does not interact at all with cardiolipin. This is Dermaseptin-SP5 from Agalychnis spurrelli (Gliding leaf frog).